A 493-amino-acid polypeptide reads, in one-letter code: Phenmedipham hydrolase (493 aa).

The active-site Acyl-ester intermediate is the Ser-188. Active-site charge relay system residues include Glu-307 and His-402.

Belongs to the type-B carboxylesterase/lipase family. In terms of assembly, monomer.

In terms of biological role, may degrade the phenylcarbamate herbicides phenmedipham and desmedipham cometabolically by hydrolyzing their central carbamate linkages. Conveys resistance to the herbicide phenmedipham. The chain is Phenmedipham hydrolase (pcd) from Pseudarthrobacter oxydans (Arthrobacter oxydans).